A 145-amino-acid polypeptide reads, in one-letter code: Protein SprT-like (145 aa).

The 137-residue stretch at Thr4 to Met140 folds into the SprT-like domain. Residue His64 coordinates Zn(2+). The active site involves Glu65. A Zn(2+)-binding site is contributed by His68.

The protein belongs to the SprT family. Zn(2+) serves as cofactor.

The protein resides in the cytoplasm. The protein is Protein SprT-like of Streptococcus pyogenes serotype M3 (strain SSI-1).